Consider the following 363-residue polypeptide: Glutamate 5-kinase (363 aa).

Lys6 lines the ATP pocket. Ser46, Asp133, and Asn145 together coordinate substrate. ATP contacts are provided by residues 165–166 (TD) and 207–213 (TGGMHTK). Positions 271 to 349 (HGRLLLDGGA…REIEALLGYT (79 aa)) constitute a PUA domain.

This sequence belongs to the glutamate 5-kinase family.

The protein resides in the cytoplasm. The enzyme catalyses L-glutamate + ATP = L-glutamyl 5-phosphate + ADP. The protein operates within amino-acid biosynthesis; L-proline biosynthesis; L-glutamate 5-semialdehyde from L-glutamate: step 1/2. Catalyzes the transfer of a phosphate group to glutamate to form L-glutamate 5-phosphate. The sequence is that of Glutamate 5-kinase from Deinococcus radiodurans (strain ATCC 13939 / DSM 20539 / JCM 16871 / CCUG 27074 / LMG 4051 / NBRC 15346 / NCIMB 9279 / VKM B-1422 / R1).